We begin with the raw amino-acid sequence, 133 residues long: Small ribosomal subunit protein uS8 (133 aa).

Belongs to the universal ribosomal protein uS8 family. As to quaternary structure, part of the 30S ribosomal subunit. Contacts proteins S5 and S12.

One of the primary rRNA binding proteins, it binds directly to 16S rRNA central domain where it helps coordinate assembly of the platform of the 30S subunit. This is Small ribosomal subunit protein uS8 from Endomicrobium trichonymphae.